Reading from the N-terminus, the 134-residue chain is Syncollin (134 aa).

The N-terminal stretch at Met-1–Gly-21 is a signal peptide.

In terms of assembly, monomer and homooligomer; most probably hexameric. Interacts with GP2. Post-translationally, contains intrachain disulfide bonds.

The protein resides in the zymogen granule membrane. It is found in the zymogen granule lumen. Functionally, functions in exocytosis in pancreatic acinar cells regulating the fusion of zymogen granules with each other. May have a pore-forming activity on membranes and regulate exocytosis in other exocrine tissues. The sequence is that of Syncollin (SYCN) from Homo sapiens (Human).